The sequence spans 494 residues: UPF0371 protein SP_0341 (494 aa).

The protein belongs to the UPF0371 family.

The polypeptide is UPF0371 protein SP_0341 (Streptococcus pneumoniae serotype 4 (strain ATCC BAA-334 / TIGR4)).